Reading from the N-terminus, the 213-residue chain is Probable septum site-determining protein MinC (213 aa).

This sequence belongs to the MinC family. As to quaternary structure, interacts with MinD and FtsZ.

Cell division inhibitor that blocks the formation of polar Z ring septums. Rapidly oscillates between the poles of the cell to destabilize FtsZ filaments that have formed before they mature into polar Z rings. Prevents FtsZ polymerization. This Clostridium botulinum (strain Eklund 17B / Type B) protein is Probable septum site-determining protein MinC.